Reading from the N-terminus, the 192-residue chain is Peptidyl-tRNA hydrolase (192 aa).

Tyr-17 contacts tRNA. His-22 (proton acceptor) is an active-site residue. TRNA contacts are provided by Phe-68, Asn-70, and Asn-116.

This sequence belongs to the PTH family. As to quaternary structure, monomer.

The protein localises to the cytoplasm. The catalysed reaction is an N-acyl-L-alpha-aminoacyl-tRNA + H2O = an N-acyl-L-amino acid + a tRNA + H(+). In terms of biological role, hydrolyzes ribosome-free peptidyl-tRNAs (with 1 or more amino acids incorporated), which drop off the ribosome during protein synthesis, or as a result of ribosome stalling. Functionally, catalyzes the release of premature peptidyl moieties from peptidyl-tRNA molecules trapped in stalled 50S ribosomal subunits, and thus maintains levels of free tRNAs and 50S ribosomes. This Buchnera aphidicola subsp. Cinara cedri (strain Cc) protein is Peptidyl-tRNA hydrolase.